The chain runs to 120 residues: Myohemerythrin (120 aa).

The Fe cation site is built by His-26, His-56, Glu-60, His-75, His-79, His-108, and Asp-113.

It belongs to the hemerythrin family. As to quaternary structure, monomer.

The protein resides in the cytoplasm. Myohemerythrin is an oxygen-binding protein found in the retractor muscles of certain worms. The oxygen-binding site contains two iron atoms. The protein is Myohemerythrin of Theromyzon tessulatum (Duck leech).